The primary structure comprises 415 residues: Serine hydroxymethyltransferase (415 aa).

Residues L118 and 122–124 (GHL) each bind (6S)-5,6,7,8-tetrahydrofolate. An N6-(pyridoxal phosphate)lysine modification is found at K227.

This sequence belongs to the SHMT family. As to quaternary structure, homodimer. Requires pyridoxal 5'-phosphate as cofactor.

It is found in the cytoplasm. It catalyses the reaction (6R)-5,10-methylene-5,6,7,8-tetrahydrofolate + glycine + H2O = (6S)-5,6,7,8-tetrahydrofolate + L-serine. It participates in one-carbon metabolism; tetrahydrofolate interconversion. The protein operates within amino-acid biosynthesis; glycine biosynthesis; glycine from L-serine: step 1/1. In terms of biological role, catalyzes the reversible interconversion of serine and glycine with tetrahydrofolate (THF) serving as the one-carbon carrier. This reaction serves as the major source of one-carbon groups required for the biosynthesis of purines, thymidylate, methionine, and other important biomolecules. Also exhibits THF-independent aldolase activity toward beta-hydroxyamino acids, producing glycine and aldehydes, via a retro-aldol mechanism. The sequence is that of Serine hydroxymethyltransferase from Elusimicrobium minutum (strain Pei191).